The primary structure comprises 438 residues: Coenzyme A disulfide reductase (438 aa).

8–33 (GAVAGGATCASQIRRLDKESDIIIFE) provides a ligand contact to FAD. Substrate is bound by residues threonine 15, glutamine 19, arginine 22, serine 39, and asparagine 42. Cysteine 43 (nucleophile) is an active-site residue. Cysteine 43 (redox-active) is an active-site residue. Lysine 71 contacts substrate. NADP(+) is bound at residue 151–166 (VLVVGAGYVSLEVLEN). 267–277 (TNVPNIYAIGD) is a binding site for FAD. Histidine 299 provides a ligand contact to substrate. An FAD-binding site is contributed by tyrosine 419. Lysine 427 lines the substrate pocket.

Belongs to the class-III pyridine nucleotide-disulfide oxidoreductase family. Homodimer. FAD serves as cofactor.

It catalyses the reaction NADP(+) + 2 CoA = CoA-disulfide + NADPH + H(+). In terms of biological role, catalyzes specifically the NADPH-dependent reduction of coenzyme A disulfide. The protein is Coenzyme A disulfide reductase of Staphylococcus aureus (strain USA300).